Here is a 463-residue protein sequence, read N- to C-terminus: Type I restriction enzyme StySPI specificity subunit (463 aa).

The protein belongs to the type-I restriction system S methylase family. As to quaternary structure, the type I restriction/modification system is composed of three polypeptides R, M and S; the restriction enzyme has stoichiometry R(2)M(2)S(1) while the methyltransferase is M(2)S(1).

Functionally, the specificity (S) subunit of a type I restriction enzyme; this subunit dictates DNA sequence specificity. The M and S subunits together form a methyltransferase (MTase) that methylates A-2 on the top strand and A-3 on the bottom strand of the sequence 5'-AACN(6)GTRC-3'. In the presence of the R subunit the complex can also act as an endonuclease, binding to the same target sequence but cutting the DNA some distance from this site. Whether the DNA is cut or modified depends on the methylation state of the target sequence. When the target site is unmodified, the DNA is cut. When the target site is hemimethylated, the complex acts as a maintenance MTase modifying the DNA so that both strands become methylated. After locating a non-methylated recognition site, the enzyme complex serves as a molecular motor that translocates DNA in an ATP-dependent manner until a collision occurs that triggers cleavage. This chain is Type I restriction enzyme StySPI specificity subunit, found in Salmonella potsdam.